Consider the following 74-residue polypeptide: Cecropin-P3 (74 aa).

Residues 1 to 13 (MFLIYLLVQTAES) form the signal peptide. The propeptide at 45-74 (RRRSVGEEDAIPSHIEVNKFFLRKPAKEHI) is removed in mature form.

Belongs to the cecropin family. In terms of tissue distribution, expressed in the body wall, intestine, uterus and ovary.

The protein localises to the secreted. Functionally, has antibacterial activity against several Gram-positive and Gram-negative bacteria. Is weakly active against yeasts. Acts by a nonpore mechanism. The polypeptide is Cecropin-P3 (ASCEC-3) (Ascaris suum (Pig roundworm)).